Here is a 216-residue protein sequence, read N- to C-terminus: MOB kinase activator 3C (216 aa).

Residues Cys82, Cys87, His164, and His169 each contribute to the Zn(2+) site.

Belongs to the MOB1/phocein family.

Its function is as follows. May regulate the activity of kinases. This Homo sapiens (Human) protein is MOB kinase activator 3C (MOB3C).